A 247-amino-acid chain; its full sequence is uncharacterized protein (247 aa).

Its subcellular location is the mitochondrion. This is an uncharacterized protein from Schizosaccharomyces pombe (strain 972 / ATCC 24843) (Fission yeast).